The primary structure comprises 319 residues: Cytochrome f (319 aa).

Residues 1–35 form the signal peptide; it reads MQNRNISYWIKKCVIQSISIVILMKIIAWPSISEA. Heme is bound by residues Tyr36, Cys56, Cys59, and His60. The helical transmembrane segment at 285-305 threads the bilayer; sequence VQSLLVFFVSVTLAQIFLVLK.

This sequence belongs to the cytochrome f family. In terms of assembly, the 4 large subunits of the cytochrome b6-f complex are cytochrome b6, subunit IV (17 kDa polypeptide, petD), cytochrome f and the Rieske protein, while the 4 small subunits are PetG, PetL, PetM and PetN. The complex functions as a dimer. It depends on heme as a cofactor.

The protein resides in the plastid. Its subcellular location is the chloroplast thylakoid membrane. In terms of biological role, component of the cytochrome b6-f complex, which mediates electron transfer between photosystem II (PSII) and photosystem I (PSI), cyclic electron flow around PSI, and state transitions. The chain is Cytochrome f from Physcomitrium patens (Spreading-leaved earth moss).